Consider the following 335-residue polypeptide: Large ribosomal subunit protein uL10 (335 aa).

The interval 306 to 335 is disordered; sequence VEETVEEEEEEEEEEDAEEEAAAGLGALFG. Residues 308–326 are compositionally biased toward acidic residues; the sequence is ETVEEEEEEEEEEDAEEEA.

It belongs to the universal ribosomal protein uL10 family. Part of the 50S ribosomal subunit. Forms part of the ribosomal stalk which helps the ribosome interact with GTP-bound translation factors. Forms a heptameric L10(L12)2(L12)2(L12)2 complex, where L10 forms an elongated spine to which the L12 dimers bind in a sequential fashion.

Functionally, forms part of the ribosomal stalk, playing a central role in the interaction of the ribosome with GTP-bound translation factors. This Methanobrevibacter smithii (strain ATCC 35061 / DSM 861 / OCM 144 / PS) protein is Large ribosomal subunit protein uL10.